The sequence spans 416 residues: Enterobactin exporter EntS (416 aa).

Topologically, residues M1 to A21 are cytoplasmic. A helical transmembrane segment spans residues V22–V42. The Periplasmic portion of the chain corresponds to Q43–G55. A helical membrane pass occupies residues L56–A76. Topologically, residues D77 to K83 are cytoplasmic. Residues V84 to L104 traverse the membrane as a helical segment. Over L105–S109 the chain is Periplasmic. The chain crosses the membrane as a helical span at residues L110 to A130. The Cytoplasmic portion of the chain corresponds to L131–R156. The helical transmembrane segment at L157–W177 threads the bilayer. A topological domain (periplasmic) is located at residue N178. The helical transmembrane segment at Y179 to L199 threads the bilayer. The Cytoplasmic segment spans residues P200–R218. The chain crosses the membrane as a helical span at residues F219 to A239. At S240 to S256 the chain is on the periplasmic side. Residues A257 to T277 traverse the membrane as a helical segment. Over S278–P287 the chain is Cytoplasmic. The chain crosses the membrane as a helical span at residues G288–L307. Topologically, residues M308 to L313 are periplasmic. A helical membrane pass occupies residues G314 to L336. Over Q337 to N356 the chain is Cytoplasmic. The chain crosses the membrane as a helical span at residues V357–V377. A topological domain (periplasmic) is located at residue A378. The chain crosses the membrane as a helical span at residues S379 to V399. At E400–S416 the chain is on the cytoplasmic side.

The protein belongs to the major facilitator superfamily. EntS (TC 2.A.1.38) family.

Its subcellular location is the cell inner membrane. Component of an export pathway for enterobactin. The sequence is that of Enterobactin exporter EntS from Escherichia coli (strain K12 / MC4100 / BW2952).